We begin with the raw amino-acid sequence, 1491 residues long: Terminal uridylyltransferase 7 (1491 aa).

Position 64 is a phosphothreonine (threonine 64). Phosphoserine is present on residues serine 132 and serine 172. Residues 165–203 are disordered; it reads MSEMEAGSPENKKQRSRPRKPRRTRTEDSEQDGDLDGPV. A compositionally biased stretch (basic residues) spans 178 to 187; sequence QRSRPRKPRR. The Matrin-type zinc finger occupies 244–274; it reads YTCKLCDALIDSIPFAHKHIKEKRHKKNLKE. A PAP-associated 1 domain is found at 551–600; the sequence is VGQLWVELLRFYALEFNLADLVISIRVKELISRESKDWPKKRIAIEDPYS. Serine 600 and serine 747 each carry phosphoserine. Disordered stretches follow at residues 740–774 and 834–911; these read AELP…KHPE and QSRT…CGEN. Acidic residues predominate over residues 844–857; the sequence is DDEEEEEEEEEEEE. The residue at position 865 (threonine 865) is a Phosphothreonine. Positions 885–897 are enriched in acidic residues; that stretch reads GEEDALSEEDDLA. Serine 891 carries the phosphoserine modification. Positions 947-1491 are sufficient for monouridylation activity; sequence RKLTFTKGKS…ASVKRTQQES (545 aa). Residues 959-976 form a CCHC-type 1 zinc finger; the sequence is VVCSLCKREGHLKKDCPE. UTP contacts are provided by residues 1043–1046, 1053–1056, asparagine 1126, lysine 1148, 1166–1170, and histidine 1282; these read SSKN, SDLD, and SYAYT. Mg(2+) is bound by residues aspartate 1054 and aspartate 1056. Residues 1230-1282 enclose the PAP-associated 2 domain; it reads VGQLWLGLLRFYTEEFDFKEHVISIRRKSLLTTFKKQWTSKYIVIEDPFDLNH. The CCHC-type 2 zinc finger occupies 1341–1358; that stretch reads RCCRICGKIGHFMKDCPM. Disordered stretches follow at residues 1362–1399 and 1463–1491; these read VRRR…EKEV and PQFK…QQES. Positions 1377–1399 are enriched in basic and acidic residues; that stretch reads SESKEKRSKEDKEIQNKYTEKEV. The segment at 1447 to 1464 adopts a CCHC-type 3 zinc-finger fold; sequence KRCFICGREGHIKKECPQ. The segment covering 1470–1481 has biased composition (polar residues); it reads GSLSSKYMTQGR.

It belongs to the DNA polymerase type-B-like family. The cofactor is Mg(2+). Mn(2+) serves as cofactor.

It is found in the cytoplasm. The enzyme catalyses RNA(n) + UTP = RNA(n)-3'-uridine ribonucleotide + diphosphate. Functionally, uridylyltransferase that mediates the terminal uridylation of mRNAs with short (less than 25 nucleotides) poly(A) tails, hence facilitating global mRNA decay. Essential for both oocyte maturation and fertility. Through 3' terminal uridylation of mRNA, sculpts, with TUT7, the maternal transcriptome by eliminating transcripts during oocyte growth. Involved in microRNA (miRNA)-induced gene silencing through uridylation of deadenylated miRNA targets. Also acts as a suppressor of miRNA biogenesis by mediating the terminal uridylation of miRNA precursors, including that of let-7 (pre-let-7). Uridylated pre-let-7 RNA is not processed by Dicer and undergo degradation. Pre-let-7 uridylation is strongly enhanced in the presence of LIN28A. Due to functional redundancy between ZCCHC6 and ZCCHC11, the identification of the specific role of each of these proteins is difficult. Involved in microRNA (miRNA)-induced gene silencing through uridylation of deadenylated miRNA targets. Also functions as an integral regulator of microRNA biogenesiS using 3 different uridylation mechanisms. Acts as a suppressor of miRNA biogenesis by mediating the terminal uridylation of some miRNA precursors, including that of let-7 (pre-let-7). Uridylated pre-let-7 RNA is not processed by Dicer and undergo degradation. Pre-let-7 oligouridylation is strongly enhanced in the presence of LIN28A. In the absence of LIN28A, TUT7 and TUT4 monouridylate group II pre-miRNAs, which includes most of pre-let7 members, that shapes an optimal 3' end overhang for efficient processing. Add oligo-U tails to truncated pre-miRNAS with a 5' overhang which may promote rapid degradation of non-functional pre-miRNA species. Does not play a role in replication-dependent histone mRNA degradation. Due to functional redundancy between TUT4 and TUT7, the identification of the specific role of each of these proteins is difficult. TUT4 and TUT7 restrict retrotransposition of long interspersed element-1 (LINE-1) in cooperation with MOV10 counteracting the RNA chaperonne activity of L1RE1. TUT7 uridylates LINE-1 mRNAs in the cytoplasm which inhibits initiation of reverse transcription once in the nucleus, whereas uridylation by TUT4 destabilizes mRNAs in cytoplasmic ribonucleoprotein granules. The polypeptide is Terminal uridylyltransferase 7 (Mus musculus (Mouse)).